The sequence spans 674 residues: UvrABC system protein C (674 aa).

Positions 16-95 (TNPGVYRFRD…IKEFKPRFNV (80 aa)) constitute a GIY-YIG domain. The 36-residue stretch at 207 to 242 (KRFTNKLEKQMAAAVARLDYEQAARIRDDITALRKV) folds into the UVR domain.

This sequence belongs to the UvrC family. Interacts with UvrB in an incision complex.

The protein localises to the cytoplasm. Functionally, the UvrABC repair system catalyzes the recognition and processing of DNA lesions. UvrC both incises the 5' and 3' sides of the lesion. The N-terminal half is responsible for the 3' incision and the C-terminal half is responsible for the 5' incision. The sequence is that of UvrABC system protein C from Pseudarthrobacter chlorophenolicus (strain ATCC 700700 / DSM 12829 / CIP 107037 / JCM 12360 / KCTC 9906 / NCIMB 13794 / A6) (Arthrobacter chlorophenolicus).